The sequence spans 917 residues: Translation initiation factor IF-2 (917 aa).

Residues 1–312 (MEEQKSIKET…KGGREENENT (312 aa)) are disordered. Positions 20 to 30 (TKKKLVIKKKA) are enriched in basic residues. Residues 41-59 (PGAQGQTTATEAKQSSPAS) are compositionally biased toward polar residues. Composition is skewed to basic and acidic residues over residues 60–76 (SDKKKDLNELIREEAKR) and 95–118 (RPDRKPEPLPQPDREKAPMDRKPE). Gly residues-rich tracts occupy residues 132-141 (SGGGQGGGNQ), 167-256 (QTGG…GYQG), and 281-293 (APGGLPGAGGPGG). The segment covering 297–312 (RVFDKEKGGREENENT) has biased composition (basic and acidic residues). Residues 414 to 587 (TRPPVVTIMG…ELLDHKANPK (174 aa)) form the tr-type G domain. Residues 423-430 (GHVDHGKT) form a G1 region. 423 to 430 (GHVDHGKT) lines the GTP pocket. Residues 448-452 (GITQH) form a G2 region. Positions 469 to 472 (DTPG) are G3. GTP-binding positions include 469–473 (DTPGH) and 523–526 (NKID). Residues 523 to 526 (NKID) form a G4 region. The segment at 559–561 (SAK) is G5.

Belongs to the TRAFAC class translation factor GTPase superfamily. Classic translation factor GTPase family. IF-2 subfamily.

It localises to the cytoplasm. Functionally, one of the essential components for the initiation of protein synthesis. Protects formylmethionyl-tRNA from spontaneous hydrolysis and promotes its binding to the 30S ribosomal subunits. Also involved in the hydrolysis of GTP during the formation of the 70S ribosomal complex. The sequence is that of Translation initiation factor IF-2 from Leptospira biflexa serovar Patoc (strain Patoc 1 / ATCC 23582 / Paris).